A 447-amino-acid chain; its full sequence is Nisin biosynthesis sensor protein NisK (447 aa).

2 consecutive transmembrane segments (helical) span residues 15-35 and 147-167; these read VIEI…LTFF and TYLF…YHLI. The Histidine kinase domain occupies 235 to 447; it reads ALSHDVKTPL…GAEVILKIKK (213 aa). The residue at position 238 (His-238) is a Phosphohistidine; by autocatalysis.

The protein resides in the cell membrane. The catalysed reaction is ATP + protein L-histidine = ADP + protein N-phospho-L-histidine.. Its function is as follows. Member of the two-component regulatory system NisK/NisR involved in the regulation of the biosynthesis of lantibiotic nisin. NisK may function as a membrane-associated protein kinase that phosphorylates NisR in response to environmental signals. The protein is Nisin biosynthesis sensor protein NisK (nisK) of Lactococcus lactis subsp. lactis (Streptococcus lactis).